The chain runs to 491 residues: Iota-carrageenase (491 aa).

Residues 1–19 (MKLQFKPVYLASIAIMAIG) form the signal peptide. A disulfide bridge connects residues C422 and C490.

It belongs to the glycosyl hydrolase 82 family.

Its subcellular location is the secreted. The enzyme catalyses Endohydrolysis of 1,4-beta-D-linkages between D-galactose 4-sulfate and 3,6-anhydro-D-galactose-2-sulfate in iota-carrageenans.. Functionally, hydrolyzes iota-carrageenans, sulfated 1,3-alpha-1,4-beta galactans from red algal cell walls, with an inversion of anomeric configuration. Also active against hybrid iota-/nu-carrageenan, not active against kappa- or lambda-carrageenans. The chain is Iota-carrageenase from Zobellia galactanivorans (strain DSM 12802 / CCUG 47099 / CIP 106680 / NCIMB 13871 / Dsij).